We begin with the raw amino-acid sequence, 417 residues long: Serine hydroxymethyltransferase (417 aa).

Residues L121 and 125–127 (GHL) each bind (6S)-5,6,7,8-tetrahydrofolate. Residue K229 is modified to N6-(pyridoxal phosphate)lysine. 355 to 357 (SPF) serves as a coordination point for (6S)-5,6,7,8-tetrahydrofolate.

This sequence belongs to the SHMT family. As to quaternary structure, homodimer. Pyridoxal 5'-phosphate serves as cofactor.

It localises to the cytoplasm. It catalyses the reaction (6R)-5,10-methylene-5,6,7,8-tetrahydrofolate + glycine + H2O = (6S)-5,6,7,8-tetrahydrofolate + L-serine. The protein operates within one-carbon metabolism; tetrahydrofolate interconversion. It participates in amino-acid biosynthesis; glycine biosynthesis; glycine from L-serine: step 1/1. In terms of biological role, catalyzes the reversible interconversion of serine and glycine with tetrahydrofolate (THF) serving as the one-carbon carrier. This reaction serves as the major source of one-carbon groups required for the biosynthesis of purines, thymidylate, methionine, and other important biomolecules. Also exhibits THF-independent aldolase activity toward beta-hydroxyamino acids, producing glycine and aldehydes, via a retro-aldol mechanism. This Erwinia tasmaniensis (strain DSM 17950 / CFBP 7177 / CIP 109463 / NCPPB 4357 / Et1/99) protein is Serine hydroxymethyltransferase.